The following is a 420-amino-acid chain: UDP-glucuronic acid decarboxylase 1 (420 aa).

M1 bears the N-acetylmethionine mark. At 1–19 the chain is on the cytoplasmic side; that stretch reads MVSKGLLRLVSSVNRRRMK. Residues 20-40 traverse the membrane as a helical; Signal-anchor for type II membrane protein segment; it reads LLLGIALFAYAASVWGNFVNM. At 41–420 the chain is on the lumenal side; it reads RSIQENGELK…RVKKGRTRHS (380 aa). The residue at position 94 (T94) is a Phosphothreonine. NAD(+) is bound by residues G98, F99, V100, D119, N120, F122, T123, G124, D144, and V145. The UDP-alpha-D-glucuronate site is built by L149 and Y150. The NAD(+) site is built by L159 and S161. UDP-alpha-D-glucuronate is bound at residue K177. Position 178 (T178) interacts with NAD(+). UDP-alpha-D-glucuronate contacts are provided by N185, G188, K191, and R192. Positions 200, 231, and 235 each coordinate NAD(+). The active-site Proton acceptor is Y231. UDP-alpha-D-glucuronate contacts are provided by Y245, Q248, and E249. Residues T261, H267, and R272 each coordinate NAD(+). An N-linked (GlcNAc...) asparagine glycan is attached at N316.

It belongs to the NAD(P)-dependent epimerase/dehydratase family. UDP-glucuronic acid decarboxylase subfamily. In terms of assembly, homodimer and homotetramer. Interacts with AKT1. NAD(+) serves as cofactor.

It is found in the golgi apparatus. The protein localises to the golgi stack membrane. It carries out the reaction UDP-alpha-D-glucuronate + H(+) = UDP-alpha-D-xylose + CO2. Its pathway is nucleotide-sugar biosynthesis; UDP-alpha-D-xylose biosynthesis; UDP-alpha-D-xylose from UDP-alpha-D-glucuronate: step 1/1. Functionally, catalyzes the NAD-dependent decarboxylation of UDP-glucuronic acid to UDP-xylose. Necessary for the biosynthesis of the core tetrasaccharide in glycosaminoglycan biosynthesis. In Mus musculus (Mouse), this protein is UDP-glucuronic acid decarboxylase 1 (Uxs1).